A 394-amino-acid polypeptide reads, in one-letter code: Chaperone protein DnaJ (394 aa).

Positions 5–75 (DYYEVLGVDK…EKKQQYDQFG (71 aa)) constitute a J domain. Residues 150-231 (GVEKTIKYKR…CRGTGTAKET (82 aa)) form a CR-type zinc finger. Positions 163, 166, 179, 182, 205, 208, 219, and 222 each coordinate Zn(2+). 4 CXXCXGXG motif repeats span residues 163-170 (CEHCHGTG), 179-186 (CPTCNGQG), 205-212 (CPDCHGTG), and 219-226 (CKHCRGTG).

It belongs to the DnaJ family. In terms of assembly, homodimer. The cofactor is Zn(2+).

It is found in the cytoplasm. Functionally, participates actively in the response to hyperosmotic and heat shock by preventing the aggregation of stress-denatured proteins and by disaggregating proteins, also in an autonomous, DnaK-independent fashion. Unfolded proteins bind initially to DnaJ; upon interaction with the DnaJ-bound protein, DnaK hydrolyzes its bound ATP, resulting in the formation of a stable complex. GrpE releases ADP from DnaK; ATP binding to DnaK triggers the release of the substrate protein, thus completing the reaction cycle. Several rounds of ATP-dependent interactions between DnaJ, DnaK and GrpE are required for fully efficient folding. Also involved, together with DnaK and GrpE, in the DNA replication of plasmids through activation of initiation proteins. This is Chaperone protein DnaJ from Fusobacterium nucleatum subsp. polymorphum (Fusobacterium polymorphum).